The chain runs to 233 residues: Orotidine 5'-phosphate decarboxylase (233 aa).

Substrate contacts are provided by residues D11, K34, 61-70 (DLKLHDIPNT), T117, R179, Q188, G208, and R209. The Proton donor role is filled by K63.

This sequence belongs to the OMP decarboxylase family. Type 1 subfamily. In terms of assembly, homodimer.

The enzyme catalyses orotidine 5'-phosphate + H(+) = UMP + CO2. It functions in the pathway pyrimidine metabolism; UMP biosynthesis via de novo pathway; UMP from orotate: step 2/2. Its function is as follows. Catalyzes the decarboxylation of orotidine 5'-monophosphate (OMP) to uridine 5'-monophosphate (UMP). This Streptococcus pneumoniae (strain Hungary19A-6) protein is Orotidine 5'-phosphate decarboxylase.